The following is a 222-amino-acid chain: MKFFIDTANLDEIRSAAELGVLDGVTTNPSLIAKIVGDPSNFTYGDFKEHIRRICEIVDGPVSAEVTCLKAEEMIAQGEDLAAIHENVVVKCPLTIDGLKAIKHFSASGIRTNATLVFSPNQALLAAKAGADYVSPFVGRLDDISTDGMELVEQIVTIYDNYGYPTEVIVASVRHPQHVVTAAMMGADIATIPYSVIKQLANHPLTDAGLTKFMDDAAVMKK.

The Schiff-base intermediate with substrate role is filled by Lys91.

Belongs to the transaldolase family. Type 3B subfamily.

It localises to the cytoplasm. The catalysed reaction is D-sedoheptulose 7-phosphate + D-glyceraldehyde 3-phosphate = D-erythrose 4-phosphate + beta-D-fructose 6-phosphate. The protein operates within carbohydrate degradation; pentose phosphate pathway; D-glyceraldehyde 3-phosphate and beta-D-fructose 6-phosphate from D-ribose 5-phosphate and D-xylulose 5-phosphate (non-oxidative stage): step 2/3. Its function is as follows. Transaldolase is important for the balance of metabolites in the pentose-phosphate pathway. This is Probable transaldolase from Chlorobium limicola (strain DSM 245 / NBRC 103803 / 6330).